The following is a 302-amino-acid chain: Dermonecrotic toxin LiSicTox-alphaIA2bii (302 aa).

Positions 1-14 (IALILVCWSVLSQA) are cleaved as a signal peptide. The propeptide occupies 15–22 (AQTDVEGR). The active site involves histidine 34. Mg(2+)-binding residues include glutamate 54 and aspartate 56. Residue histidine 70 is the Nucleophile of the active site. 2 disulfide bridges follow: cysteine 74–cysteine 80 and cysteine 76–cysteine 219. A Mg(2+)-binding site is contributed by aspartate 114. The N-linked (GlcNAc...) asparagine glycan is linked to asparagine 279.

The protein belongs to the arthropod phospholipase D family. Class II subfamily. Mg(2+) is required as a cofactor. Expressed by the venom gland.

Its subcellular location is the secreted. It carries out the reaction an N-(acyl)-sphingosylphosphocholine = an N-(acyl)-sphingosyl-1,3-cyclic phosphate + choline. The catalysed reaction is an N-(acyl)-sphingosylphosphoethanolamine = an N-(acyl)-sphingosyl-1,3-cyclic phosphate + ethanolamine. The enzyme catalyses a 1-acyl-sn-glycero-3-phosphocholine = a 1-acyl-sn-glycero-2,3-cyclic phosphate + choline. It catalyses the reaction a 1-acyl-sn-glycero-3-phosphoethanolamine = a 1-acyl-sn-glycero-2,3-cyclic phosphate + ethanolamine. Dermonecrotic toxins cleave the phosphodiester linkage between the phosphate and headgroup of certain phospholipids (sphingolipid and lysolipid substrates), forming an alcohol (often choline) and a cyclic phosphate. This toxin acts on sphingomyelin (SM). It may also act on ceramide phosphoethanolamine (CPE), lysophosphatidylcholine (LPC) and lysophosphatidylethanolamine (LPE), but not on lysophosphatidylserine (LPS), and lysophosphatidylglycerol (LPG). It acts by transphosphatidylation, releasing exclusively cyclic phosphate products as second products. Induces dermonecrosis, hemolysis, increased vascular permeability, edema, inflammatory response, and platelet aggregation. The polypeptide is Dermonecrotic toxin LiSicTox-alphaIA2bii (Loxosceles intermedia (Brown spider)).